A 330-amino-acid chain; its full sequence is tRNA U34 carboxymethyltransferase (330 aa).

Residues Lys91, Trp105, Lys110, Gly130, 152–154 (DPS), 181–182 (IE), Met196, Tyr200, and Arg315 contribute to the carboxy-S-adenosyl-L-methionine site.

This sequence belongs to the class I-like SAM-binding methyltransferase superfamily. CmoB family. As to quaternary structure, homotetramer.

The enzyme catalyses carboxy-S-adenosyl-L-methionine + 5-hydroxyuridine(34) in tRNA = 5-carboxymethoxyuridine(34) in tRNA + S-adenosyl-L-homocysteine + H(+). In terms of biological role, catalyzes carboxymethyl transfer from carboxy-S-adenosyl-L-methionine (Cx-SAM) to 5-hydroxyuridine (ho5U) to form 5-carboxymethoxyuridine (cmo5U) at position 34 in tRNAs. This chain is tRNA U34 carboxymethyltransferase, found in Shewanella piezotolerans (strain WP3 / JCM 13877).